Reading from the N-terminus, the 1318-residue chain is Major viral transcription factor ICP4 homolog (1318 aa).

The span at 1-11 shows a compositional bias: basic residues; sequence MSAEQRKKKKT. Disordered stretches follow at residues 1–108, 123–324, 542–580, 606–630, 780–873, and 1291–1318; these read MSAE…ADGV, EAVR…RLER, LTGA…AASP, PASA…GGRR, LAAP…TPAP, and AGLA…LFGE. Residues 44 to 56 are compositionally biased toward pro residues; sequence SPDPADGPPPTPN. The span at 74–91 shows a compositional bias: acidic residues; that stretch reads EENEDEADDAAADADADE. Residues 133 to 143 show a composition bias toward basic and acidic residues; that stretch reads PERDGAQEEAA. A compositionally biased stretch (acidic residues) spans 159-174; sequence GEENDDDDDDDDDDDR. Basic residues predominate over residues 206-226; it reads APRRHHHHHHHRRRRAPRRRS. Composition is skewed to low complexity over residues 228 to 257 and 268 to 278; these read ASDS…SASS and RAPASAADHAA. Residues 299–308 show a composition bias toward pro residues; sequence APRPSPPRAE. A compositionally biased stretch (low complexity) spans 309 to 320; the sequence is PAPARTPAATAG. A DNA-binding region spans residues 319-547; that stretch reads AGRLERRRAR…ENAALTGART (229 aa). A compositionally biased stretch (basic and acidic residues) spans 547 to 564; that stretch reads TPDDGGDANRHDGDDARG. A compositionally biased stretch (low complexity) spans 566 to 580; sequence PAAAAAPLPSAAASP. Composition is skewed to pro residues over residues 799–808 and 821–843; these read ARAPPGGAPR and AAAP…PPRP. Residues 844 to 863 show a composition bias toward low complexity; the sequence is AALTRRPAEGPDPQGGWRRQ. The span at 1303–1318 shows a compositional bias: acidic residues; that stretch reads DMDAELEDDDDGLFGE.

The protein belongs to the herpesviridae ICP4 family. In terms of assembly, homodimer. Interacts with transcriptional regulator ICP27; this interaction is required for proper incorporation of ICP4 into virions. Interacts with host TBP; theis interaction helps the stabilization of the pre-initiation complex on specific promoters. Interacts with host GTF2B. ADP-ribosylated. In terms of processing, the long stretch of Ser is a major site of phosphorylation. Only the phosphorylated forms are capable of interacting with beta or gamma genes.

It localises to the host nucleus. The protein resides in the host cytoplasm. Its subcellular location is the virion tegument. In terms of biological role, plays an essential role in the regulation of viral gene expression by both activating and repressing host RNA polymerase II-mediated transcription. Binds with high affinity to the sequence 5'-ATCGTC-3'. Activates transcription by recruiting a form of the host TFIID to promoters and stabilizing the pre-initiation complex formation. Negatively regulates its own transcription. This immediate early (IE) protein is absolutely necessary for the transition from IE transcription to later viral gene transcription. In addition, binds to the host promoters of CXCR3 ligands including CXCL9, CXCL10, and CXCL11 and interacts with TBP to activate their transcription. In turn, mediates CD4+ T-cell migration. The polypeptide is Major viral transcription factor ICP4 homolog (ICP4) (Human herpesvirus 2 (strain HG52) (HHV-2)).